Reading from the N-terminus, the 471-residue chain is 6-phosphofructo-2-kinase/fructose-2,6-bisphosphatase 1 (471 aa).

N-acetylserine is present on Ser-2. The tract at residues 2–250 (SQEMGELTQT…VYYLMNIHVT (249 aa)) is 6-phosphofructo-2-kinase. Ser-33 is subject to Phosphoserine; by PKA. Residue 49 to 57 (GLPARGKTY) participates in ATP binding. Arg-82 and Arg-105 together coordinate beta-D-fructose 6-phosphate. The active site involves Asp-131. Thr-133 and Arg-139 together coordinate beta-D-fructose 6-phosphate. At Ser-141 the chain carries Phosphoserine. Residue Cys-161 is part of the active site. 170–175 (NIRQVK) is an ATP binding site. 3 residues coordinate beta-D-fructose 6-phosphate: Lys-175, Arg-196, and Tyr-200. Residues 251 to 471 (PRSIYLCRHG…EALDTVPAHY (221 aa)) are fructose-2,6-bisphosphatase. A beta-D-fructose 2,6-bisphosphate-binding site is contributed by Arg-258. The active-site Tele-phosphohistidine intermediate is the His-259. Residues Asn-265, Gly-271, and Arg-308 each contribute to the beta-D-fructose 2,6-bisphosphate site. Catalysis depends on Glu-328, which acts as the Proton donor/acceptor. Positions 339, 353, 357, 368, 394, and 398 each coordinate beta-D-fructose 2,6-bisphosphate. 350-353 (FALR) contacts ATP. Residues 394 to 398 (QAVMR) and Tyr-430 each bind ATP.

In the C-terminal section; belongs to the phosphoglycerate mutase family. As to quaternary structure, homodimer. In terms of tissue distribution, liver.

The enzyme catalyses beta-D-fructose 2,6-bisphosphate + H2O = beta-D-fructose 6-phosphate + phosphate. It catalyses the reaction beta-D-fructose 6-phosphate + ATP = beta-D-fructose 2,6-bisphosphate + ADP + H(+). With respect to regulation, phosphorylation at Ser-33 inhibits the kinase and activates the bisphosphatase. Synthesis and degradation of fructose 2,6-bisphosphate. The chain is 6-phosphofructo-2-kinase/fructose-2,6-bisphosphatase 1 from Bos taurus (Bovine).